The sequence spans 306 residues: MARAAELSDVMSVQALHDEARAKVNLTLRVLGRRVDGYHELESVVAFADCADRLTLQAGSELSLTATGPRVQECGDNADNLVIKAARLLGERVADLRTGSFALDKQLPIAAGIGGGSADAAAALRLLARANDLALDDPRLIDAARKTGADVPVCLASKSCIMTGIGETLLPLALPRLPVVMVNPRVAVATKDVFAALGLRSGQLRVGVTDVVTAPKWPDQAAPLDAWIAVLAAGINDLEAPAKKLQPVIGEVLKLLGKARGARLARMSGSGATCFAIFADAAAAEAAAQSVSAAHPDWWVHAGTLG.

The active site involves Lys-23. Residue 108 to 118 participates in ATP binding; that stretch reads PIAAGIGGGSA. Asp-150 is an active-site residue.

Belongs to the GHMP kinase family. IspE subfamily.

The enzyme catalyses 4-CDP-2-C-methyl-D-erythritol + ATP = 4-CDP-2-C-methyl-D-erythritol 2-phosphate + ADP + H(+). It participates in isoprenoid biosynthesis; isopentenyl diphosphate biosynthesis via DXP pathway; isopentenyl diphosphate from 1-deoxy-D-xylulose 5-phosphate: step 3/6. Its function is as follows. Catalyzes the phosphorylation of the position 2 hydroxy group of 4-diphosphocytidyl-2C-methyl-D-erythritol. This is 4-diphosphocytidyl-2-C-methyl-D-erythritol kinase from Rhodopseudomonas palustris (strain BisB18).